The chain runs to 427 residues: Gamma-glutamyl phosphate reductase (427 aa).

The protein belongs to the gamma-glutamyl phosphate reductase family.

It is found in the cytoplasm. The enzyme catalyses L-glutamate 5-semialdehyde + phosphate + NADP(+) = L-glutamyl 5-phosphate + NADPH + H(+). Its pathway is amino-acid biosynthesis; L-proline biosynthesis; L-glutamate 5-semialdehyde from L-glutamate: step 2/2. In terms of biological role, catalyzes the NADPH-dependent reduction of L-glutamate 5-phosphate into L-glutamate 5-semialdehyde and phosphate. The product spontaneously undergoes cyclization to form 1-pyrroline-5-carboxylate. This chain is Gamma-glutamyl phosphate reductase, found in Brucella ovis (strain ATCC 25840 / 63/290 / NCTC 10512).